We begin with the raw amino-acid sequence, 37 residues long: Large ribosomal subunit protein bL36 (37 aa).

This sequence belongs to the bacterial ribosomal protein bL36 family.

This is Large ribosomal subunit protein bL36 from Pasteurella multocida (strain Pm70).